A 149-amino-acid polypeptide reads, in one-letter code: Ribonuclease H (149 aa).

An RNase H type-1 domain is found at 1-143; the sequence is MNAVEIYTDG…ADMLANRGVE (143 aa). Residues D9, E47, D69, and D135 each contribute to the Mg(2+) site.

This sequence belongs to the RNase H family. As to quaternary structure, monomer. Mg(2+) serves as cofactor.

It is found in the cytoplasm. The enzyme catalyses Endonucleolytic cleavage to 5'-phosphomonoester.. Its function is as follows. Endonuclease that specifically degrades the RNA of RNA-DNA hybrids. In Albidiferax ferrireducens (strain ATCC BAA-621 / DSM 15236 / T118) (Rhodoferax ferrireducens), this protein is Ribonuclease H.